The primary structure comprises 237 residues: Nodulation protein NolA (237 aa).

Residues 10-79 (RWRIGELAGA…LQEIRRAMDG (70 aa)) form the HTH merR-type domain. Positions 13–32 (IGELAGATGVTVRTLHHYEH) form a DNA-binding region, H-T-H motif.

In terms of biological role, involved in genotype-specific nodulation of soybeans. This Bradyrhizobium sp. (strain NC92) protein is Nodulation protein NolA (nolA).